Reading from the N-terminus, the 149-residue chain is UPF0178 protein CPF_2548 (149 aa).

This sequence belongs to the UPF0178 family.

The polypeptide is UPF0178 protein CPF_2548 (Clostridium perfringens (strain ATCC 13124 / DSM 756 / JCM 1290 / NCIMB 6125 / NCTC 8237 / Type A)).